Reading from the N-terminus, the 170-residue chain is Ribosome maturation factor RimM (170 aa).

The region spanning 92 to 163 (KEGWYYFELE…RMDVELPPGL (72 aa)) is the PRC barrel domain.

The protein belongs to the RimM family. Binds ribosomal protein uS19.

The protein resides in the cytoplasm. Its function is as follows. An accessory protein needed during the final step in the assembly of 30S ribosomal subunit, possibly for assembly of the head region. Essential for efficient processing of 16S rRNA. May be needed both before and after RbfA during the maturation of 16S rRNA. It has affinity for free ribosomal 30S subunits but not for 70S ribosomes. This chain is Ribosome maturation factor RimM, found in Desulfitobacterium hafniense (strain Y51).